Consider the following 51-residue polypeptide: Large ribosomal subunit protein eL39 (51 aa).

Residues 1–23 (MPSQKSFRTKQKLAKAQKQNRPL) form a disordered region.

It belongs to the eukaryotic ribosomal protein eL39 family. In terms of assembly, component of the large ribosomal subunit. Mature ribosomes consist of a small (40S) and a large (60S) subunit. The 40S subunit contains about 32 different proteins and 1 molecule of RNA (18S). The 60S subunit contains 45 different proteins and 3 molecules of RNA (25S, 5.8S and 5S).

The protein resides in the cytoplasm. Its function is as follows. Component of the ribosome, a large ribonucleoprotein complex responsible for the synthesis of proteins in the cell. The small ribosomal subunit (SSU) binds messenger RNAs (mRNAs) and translates the encoded message by selecting cognate aminoacyl-transfer RNA (tRNA) molecules. The large subunit (LSU) contains the ribosomal catalytic site termed the peptidyl transferase center (PTC), which catalyzes the formation of peptide bonds, thereby polymerizing the amino acids delivered by tRNAs into a polypeptide chain. The nascent polypeptides leave the ribosome through a tunnel in the LSU and interact with protein factors that function in enzymatic processing, targeting, and the membrane insertion of nascent chains at the exit of the ribosomal tunnel. The polypeptide is Large ribosomal subunit protein eL39 (Candida albicans (strain SC5314 / ATCC MYA-2876) (Yeast)).